Consider the following 457-residue polypeptide: Ribulose bisphosphate carboxylase large chain (457 aa).

The propeptide occupies 1-2 (MS). N-acetylproline is present on P3. The residue at position 14 (K14) is an N6,N6,N6-trimethyllysine. 2 residues coordinate substrate: N123 and T173. K175 acts as the Proton acceptor in catalysis. Position 177 (K177) interacts with substrate. Residues K201, D203, and E204 each contribute to the Mg(2+) site. K201 is subject to N6-carboxylysine. H294 serves as the catalytic Proton acceptor. Residues R295, H327, and S379 each coordinate substrate.

The protein belongs to the RuBisCO large chain family. Type I subfamily. As to quaternary structure, heterohexadecamer of 8 large chains and 8 small chains; disulfide-linked. The disulfide link is formed within the large subunit homodimers. Mg(2+) serves as cofactor. Post-translationally, the disulfide bond which can form in the large chain dimeric partners within the hexadecamer appears to be associated with oxidative stress and protein turnover.

It localises to the plastid. Its subcellular location is the chloroplast. The enzyme catalyses 2 (2R)-3-phosphoglycerate + 2 H(+) = D-ribulose 1,5-bisphosphate + CO2 + H2O. The catalysed reaction is D-ribulose 1,5-bisphosphate + O2 = 2-phosphoglycolate + (2R)-3-phosphoglycerate + 2 H(+). Its function is as follows. RuBisCO catalyzes two reactions: the carboxylation of D-ribulose 1,5-bisphosphate, the primary event in carbon dioxide fixation, as well as the oxidative fragmentation of the pentose substrate in the photorespiration process. Both reactions occur simultaneously and in competition at the same active site. This Phelline comosa protein is Ribulose bisphosphate carboxylase large chain.